A 360-amino-acid chain; its full sequence is Membrane-bound lytic murein transglycosylase C (360 aa).

The first 16 residues, 1 to 16 (MKKLLALAVIAPLLIS), serve as a signal peptide directing secretion. Cysteine 17 carries the N-palmitoyl cysteine lipid modification. Residue cysteine 17 is the site of S-diacylglycerol cysteine attachment.

This sequence belongs to the transglycosylase Slt family.

It is found in the cell outer membrane. The catalysed reaction is Exolytic cleavage of the (1-&gt;4)-beta-glycosidic linkage between N-acetylmuramic acid (MurNAc) and N-acetylglucosamine (GlcNAc) residues in peptidoglycan, from either the reducing or the non-reducing ends of the peptidoglycan chains, with concomitant formation of a 1,6-anhydrobond in the MurNAc residue.. Functionally, murein-degrading enzyme. May play a role in recycling of muropeptides during cell elongation and/or cell division. This chain is Membrane-bound lytic murein transglycosylase C, found in Salmonella paratyphi A (strain ATCC 9150 / SARB42).